A 77-amino-acid chain; its full sequence is Large ribosomal subunit protein eL20 (77 aa).

This sequence belongs to the eukaryotic ribosomal protein eL20 family. As to quaternary structure, part of the 50S ribosomal subunit. Binds 23S rRNA.

The sequence is that of Large ribosomal subunit protein eL20 from Thermococcus gammatolerans (strain DSM 15229 / JCM 11827 / EJ3).